The chain runs to 569 residues: Putative ABC transporter ATP-binding protein TTE1589 (569 aa).

2 ABC transporter domains span residues 8–248 (IIVK…IGLM) and 309–542 (IQAK…LSLK). ATP is bound by residues 43-50 (GPSGAGKS) and 342-349 (GHNGSGKT).

It belongs to the ABC transporter superfamily.

The protein resides in the cell membrane. Its function is as follows. Probably part of an ABC transporter complex. Responsible for energy coupling to the transport system. This is Putative ABC transporter ATP-binding protein TTE1589 from Caldanaerobacter subterraneus subsp. tengcongensis (strain DSM 15242 / JCM 11007 / NBRC 100824 / MB4) (Thermoanaerobacter tengcongensis).